The primary structure comprises 311 residues: tRNA-cytidine(32) 2-sulfurtransferase (311 aa).

The short motif at 47 to 52 (SGGKDS) is the PP-loop motif element. Residues Cys122, Cys125, and Cys213 each contribute to the [4Fe-4S] cluster site.

It belongs to the TtcA family. In terms of assembly, homodimer. Requires Mg(2+) as cofactor. It depends on [4Fe-4S] cluster as a cofactor.

The protein localises to the cytoplasm. The enzyme catalyses cytidine(32) in tRNA + S-sulfanyl-L-cysteinyl-[cysteine desulfurase] + AH2 + ATP = 2-thiocytidine(32) in tRNA + L-cysteinyl-[cysteine desulfurase] + A + AMP + diphosphate + H(+). The protein operates within tRNA modification. In terms of biological role, catalyzes the ATP-dependent 2-thiolation of cytidine in position 32 of tRNA, to form 2-thiocytidine (s(2)C32). The sulfur atoms are provided by the cysteine/cysteine desulfurase (IscS) system. This chain is tRNA-cytidine(32) 2-sulfurtransferase, found in Shigella flexneri serotype 5b (strain 8401).